Here is a 233-residue protein sequence, read N- to C-terminus: Uridylate kinase (233 aa).

9–10 (GS) is a binding site for ATP. Residue Gly-43 participates in UMP binding. Residues Gly-44 and Arg-48 each contribute to the ATP site. UMP contacts are provided by residues Asp-65 and 113 to 119 (VTPGQTT). Residues Thr-139, Tyr-145, and Asp-148 each coordinate ATP.

Belongs to the UMP kinase family. As to quaternary structure, homohexamer.

It is found in the cytoplasm. The catalysed reaction is UMP + ATP = UDP + ADP. It participates in pyrimidine metabolism; CTP biosynthesis via de novo pathway; UDP from UMP (UMPK route): step 1/1. Its activity is regulated as follows. Inhibited by UTP. Its function is as follows. Catalyzes the reversible phosphorylation of UMP to UDP. This Methanosarcina barkeri (strain Fusaro / DSM 804) protein is Uridylate kinase.